A 638-amino-acid polypeptide reads, in one-letter code: MGKIIGIDLGTTNSCVAVLDGGKARVLENAEGDRTTPSIVAYTDEEIIVGQPAKRQAVTNPNNTFFAIKRLIGRRFKDDEVQRDVDIMPFKIIGADNGDAWVEQRGNKMAPPQVSAEILKKMKKTAEDFLGEEVTEAVITVPAYFNDSQRQATKDAGRIAGLEVKRIINEPTAAALAYGIDKKQGDNIVAVYDLGGGTFDISIIEIDSNDGDQTFEVLATNGDTHLGGEDFDNRLINYLADEFKKDQGLDLRRDPLAMQRLKEAAEKAKIELSSTNQTEVNLPYITADASGPKHLVVKVTRTKLESLVEDLIQRTLEPLKVALADADLSVSEINEVILVGGQTRMPKVQEAVTNFFGKEPRKDVNPDEAVAVGAAIQAGVLSGEVKDVLLLDVTPLSLGIETMGSVMTKLIDKNTTIPTKAQQVFSTADDNQSAVTIHVLQGERKQASANKSLGQFNLEGIEPAPRGQPQVEVMFDIDADGILHVSATDKKTGKKQNITIKASSGLSDEEVEQMVRDAEAHADEDAKFEALVQARNQADGLVHATKKQVTEAGDALASDEKEKIEAAMAAVDEATKGKDAEAIEKATQALIEASAKLMEIAQAKSQAQGGEEAQAKDAGQSNDDVVDAEFEEVKDDKK.

Residue Thr198 is modified to Phosphothreonine; by autocatalysis. The segment at 602-638 (QAKSQAQGGEEAQAKDAGQSNDDVVDAEFEEVKDDKK) is disordered. The segment covering 624–638 (DVVDAEFEEVKDDKK) has biased composition (acidic residues).

It belongs to the heat shock protein 70 family.

Functionally, acts as a chaperone. The protein is Chaperone protein DnaK of Shewanella denitrificans (strain OS217 / ATCC BAA-1090 / DSM 15013).